A 313-amino-acid polypeptide reads, in one-letter code: Aspartate carbamoyltransferase catalytic subunit (313 aa).

Residues arginine 61 and threonine 62 each contribute to the carbamoyl phosphate site. Position 89 (lysine 89) interacts with L-aspartate. Residues arginine 111, histidine 139, and glutamine 142 each coordinate carbamoyl phosphate. 2 residues coordinate L-aspartate: arginine 172 and arginine 227. Residues glycine 268 and proline 269 each contribute to the carbamoyl phosphate site.

This sequence belongs to the aspartate/ornithine carbamoyltransferase superfamily. ATCase family. In terms of assembly, heterododecamer (2C3:3R2) of six catalytic PyrB chains organized as two trimers (C3), and six regulatory PyrI chains organized as three dimers (R2).

The enzyme catalyses carbamoyl phosphate + L-aspartate = N-carbamoyl-L-aspartate + phosphate + H(+). Its pathway is pyrimidine metabolism; UMP biosynthesis via de novo pathway; (S)-dihydroorotate from bicarbonate: step 2/3. In terms of biological role, catalyzes the condensation of carbamoyl phosphate and aspartate to form carbamoyl aspartate and inorganic phosphate, the committed step in the de novo pyrimidine nucleotide biosynthesis pathway. In Gluconobacter oxydans (strain 621H) (Gluconobacter suboxydans), this protein is Aspartate carbamoyltransferase catalytic subunit.